Here is a 481-residue protein sequence, read N- to C-terminus: Protein nucleotidyltransferase YdiU (481 aa).

ATP is bound by residues Gly-85, Gly-87, Arg-88, Lys-108, Asp-120, Gly-121, Arg-171, and Arg-178. Asp-248 acts as the Proton acceptor in catalysis. Mg(2+) is bound by residues Asn-249 and Asp-258. Asp-258 is an ATP binding site. Residues 458–481 form a disordered region; it reads HPGLAEFQQPPTPEQKGLQLSCSS.

It belongs to the SELO family. Mg(2+) serves as cofactor. It depends on Mn(2+) as a cofactor.

The enzyme catalyses L-seryl-[protein] + ATP = 3-O-(5'-adenylyl)-L-seryl-[protein] + diphosphate. It carries out the reaction L-threonyl-[protein] + ATP = 3-O-(5'-adenylyl)-L-threonyl-[protein] + diphosphate. It catalyses the reaction L-tyrosyl-[protein] + ATP = O-(5'-adenylyl)-L-tyrosyl-[protein] + diphosphate. The catalysed reaction is L-histidyl-[protein] + UTP = N(tele)-(5'-uridylyl)-L-histidyl-[protein] + diphosphate. The enzyme catalyses L-seryl-[protein] + UTP = O-(5'-uridylyl)-L-seryl-[protein] + diphosphate. It carries out the reaction L-tyrosyl-[protein] + UTP = O-(5'-uridylyl)-L-tyrosyl-[protein] + diphosphate. In terms of biological role, nucleotidyltransferase involved in the post-translational modification of proteins. It can catalyze the addition of adenosine monophosphate (AMP) or uridine monophosphate (UMP) to a protein, resulting in modifications known as AMPylation and UMPylation. This Hydrogenovibrio crunogenus (strain DSM 25203 / XCL-2) (Thiomicrospira crunogena) protein is Protein nucleotidyltransferase YdiU.